A 62-amino-acid polypeptide reads, in one-letter code: Small ribosomal subunit protein bS21 (62 aa).

Basic and acidic residues predominate over residues 43–52 (VKKKLKSEAA). The interval 43–62 (VKKKLKSEAARKRKNRRRFK) is disordered. A compositionally biased stretch (basic residues) spans 53–62 (RKRKNRRRFK).

It belongs to the bacterial ribosomal protein bS21 family.

The polypeptide is Small ribosomal subunit protein bS21 (Lactiplantibacillus plantarum (strain ATCC BAA-793 / NCIMB 8826 / WCFS1) (Lactobacillus plantarum)).